Consider the following 174-residue polypeptide: Repair DNA polymerase X (174 aa).

An involved in ssDNA binding region spans residues Arg-42–Asp-51. 2 residues coordinate Mg(2+): Asp-49 and Asp-51. Residues Cys-81 and Cys-86 are joined by a disulfide bond. Position 100 (Asp-100) interacts with Mg(2+).

This sequence belongs to the DNA polymerase type-X family. It depends on Mg(2+) as a cofactor.

The protein localises to the virion. The enzyme catalyses DNA(n) + a 2'-deoxyribonucleoside 5'-triphosphate = DNA(n+1) + diphosphate. In terms of biological role, error-prone polymerase lacking a proofreading 3'-5' exonuclease which catalyzes the gap-filling reaction during the DNA repair process. Specifically binds intermediates in the single-nucleotide base-excision repair process. Also catalyzes DNA polymerization with low nucleotide-insertion fidelity. Probably acts as a strategic DNA mutase, which gives rise to a rapid emergence of variants. Generates mismatched G-G pairs, in that case, the polymerase first binds the deoxynucleotide followed by mismatch formation. Together with the viral DNA ligase, fills the single nucleotide gaps generated by the AP endonuclease. Binds DNA with high affinity via the helix alphaE. The chain is Repair DNA polymerase X from African swine fever virus (isolate Tick/Malawi/Lil 20-1/1983) (ASFV).